A 387-amino-acid polypeptide reads, in one-letter code: Alkanesulfonate monooxygenase (387 aa).

This sequence belongs to the SsuD family.

The enzyme catalyses an alkanesulfonate + FMNH2 + O2 = an aldehyde + FMN + sulfite + H2O + 2 H(+). In terms of biological role, catalyzes the desulfonation of aliphatic sulfonates. This Ralstonia pickettii (strain 12J) protein is Alkanesulfonate monooxygenase.